We begin with the raw amino-acid sequence, 350 residues long: 4-hydroxy-3-methylbut-2-enyl diphosphate reductase (350 aa).

Cys-36 is a [4Fe-4S] cluster binding site. The (2E)-4-hydroxy-3-methylbut-2-enyl diphosphate site is built by His-65 and His-101. Residues His-65 and His-101 each coordinate dimethylallyl diphosphate. 2 residues coordinate isopentenyl diphosphate: His-65 and His-101. Cys-123 provides a ligand contact to [4Fe-4S] cluster. Residue His-151 coordinates (2E)-4-hydroxy-3-methylbut-2-enyl diphosphate. His-151 provides a ligand contact to dimethylallyl diphosphate. His-151 is a binding site for isopentenyl diphosphate. The active-site Proton donor is the Glu-153. Thr-192 lines the (2E)-4-hydroxy-3-methylbut-2-enyl diphosphate pocket. Cys-222 is a binding site for [4Fe-4S] cluster. Positions 250, 251, 252, and 295 each coordinate (2E)-4-hydroxy-3-methylbut-2-enyl diphosphate. 4 residues coordinate dimethylallyl diphosphate: Ser-250, Ser-251, Asn-252, and Ser-295. Ser-250, Ser-251, Asn-252, and Ser-295 together coordinate isopentenyl diphosphate.

This sequence belongs to the IspH family. Requires [4Fe-4S] cluster as cofactor.

It catalyses the reaction isopentenyl diphosphate + 2 oxidized [2Fe-2S]-[ferredoxin] + H2O = (2E)-4-hydroxy-3-methylbut-2-enyl diphosphate + 2 reduced [2Fe-2S]-[ferredoxin] + 2 H(+). It carries out the reaction dimethylallyl diphosphate + 2 oxidized [2Fe-2S]-[ferredoxin] + H2O = (2E)-4-hydroxy-3-methylbut-2-enyl diphosphate + 2 reduced [2Fe-2S]-[ferredoxin] + 2 H(+). It participates in isoprenoid biosynthesis; dimethylallyl diphosphate biosynthesis; dimethylallyl diphosphate from (2E)-4-hydroxy-3-methylbutenyl diphosphate: step 1/1. It functions in the pathway isoprenoid biosynthesis; isopentenyl diphosphate biosynthesis via DXP pathway; isopentenyl diphosphate from 1-deoxy-D-xylulose 5-phosphate: step 6/6. Catalyzes the conversion of 1-hydroxy-2-methyl-2-(E)-butenyl 4-diphosphate (HMBPP) into a mixture of isopentenyl diphosphate (IPP) and dimethylallyl diphosphate (DMAPP). Acts in the terminal step of the DOXP/MEP pathway for isoprenoid precursor biosynthesis. The chain is 4-hydroxy-3-methylbut-2-enyl diphosphate reductase from Rhizobium meliloti (strain 1021) (Ensifer meliloti).